A 1299-amino-acid chain; its full sequence is Tenascin-N (1299 aa).

Residues 1-28 form the signal peptide; the sequence is MSLQEMFRFPMGLLLGSVLLVASAPATL. 3 consecutive EGF-like domains span residues 167–198, 199–229, and 230–260; these read ERLACPGACSGHGRCVDGRCLCHEPYVGADCG, YPACPENCSGHGECVRGVCQCHEDFMSEDCS, and EKRCPGDCSGHGFCDTGECYCEEGFTGLDCA. Cystine bridges form between Cys171–Cys181, Cys175–Cys186, Cys188–Cys197, Cys202–Cys212, Cys206–Cys217, Cys219–Cys228, Cys233–Cys243, Cys237–Cys248, and Cys250–Cys259. 9 Fibronectin type-III domains span residues 264–352, 353–444, 445–532, 533–623, 624–709, 710–800, 801–886, 887–976, and 977–1063; these read TPQG…TDLA, VLGT…TEID, SPTN…TEID, SPAN…IDSP, KNLV…TDID, SPQN…IDSP, QNLV…TEID, GPKN…LDPP, and RNLR…VGAR. Residues 605 to 624 are disordered; the sequence is GDRESKKADTNAPTDIDSPK. Basic and acidic residues predominate over residues 960 to 977; that stretch reads QESKKADTKAQTELDPPR. Positions 960 to 982 are disordered; sequence QESKKADTKAQTELDPPRNLRPS. In terms of domain architecture, Fibrinogen C-terminal spans 1061-1278; the sequence is GARFPHPSDC…YVELKIRPHG (218 aa). An N-linked (GlcNAc...) asparagine glycan is attached at Asn1149.

It belongs to the tenascin family. In terms of assembly, homohexamer. Not detected in normal adult mammary tissues or brain but expressed in most breast tumors and brain tumors, such as glioblastomas, astrocytomas and oligodendrogliomas, tested. In brain tumors, detected around the endothelial cell layer of the clood vessels.

The protein resides in the secreted. The protein localises to the extracellular space. Its subcellular location is the extracellular matrix. In terms of biological role, extracellular matrix protein that seems to be a ligand for ITGA8:ITGB1, ITGAV:ITGB1 and ITGA4:ITGB1. Involved in neurite outgrowth and cell migration in hippocampal explants. During endochondral bone formation, inhibits proliferation and differentiation of proteoblasts mediated by canonical WNT signaling. In tumors, stimulates angiogenesis by elongation, migration and sprouting of endothelial cells. Expressed in most mammary tumors, may facilitate tumorigenesis by supporting the migratory behavior of breast cancer cells. This chain is Tenascin-N, found in Homo sapiens (Human).